Reading from the N-terminus, the 147-residue chain is UPF0735 ACT domain-containing protein GK2605 (147 aa).

The 76-residue stretch at 69-144 folds into the ACT domain; it reads TLFFHLEDRS…FVEKVEIVGS (76 aa).

The protein belongs to the UPF0735 family.

The polypeptide is UPF0735 ACT domain-containing protein GK2605 (Geobacillus kaustophilus (strain HTA426)).